We begin with the raw amino-acid sequence, 297 residues long: Small ribosomal subunit protein uS2 (297 aa).

A disordered region spans residues 266–297; it reads GASWDAAEPSDWAATPAAAGQEWAASGATEQW. Over residues 282–297 the composition is skewed to low complexity; the sequence is AAAGQEWAASGATEQW.

Belongs to the universal ribosomal protein uS2 family. In terms of assembly, component of the small ribosomal subunit. Mature ribosomes consist of a small (40S) and a large (60S) subunit. The 40S subunit contains about 33 different proteins and 1 molecule of RNA (18S). The 60S subunit contains about 49 different proteins and 3 molecules of RNA (25S, 5.8S and 5S). Interacts with rps21.

Its subcellular location is the cytoplasm. Its function is as follows. Required for the assembly and/or stability of the 40S ribosomal subunit. Required for the processing of the 20S rRNA-precursor to mature 18S rRNA in a late step of the maturation of 40S ribosomal subunits. The chain is Small ribosomal subunit protein uS2 (rps0) from Sclerotinia sclerotiorum (strain ATCC 18683 / 1980 / Ss-1) (White mold).